Here is a 214-residue protein sequence, read N- to C-terminus: Urease accessory protein UreF (214 aa).

The segment at 70 to 95 (AAAGEAGDAETDARTPSPAARAASRA) is disordered. Residues 83 to 95 (RTPSPAARAASRA) are compositionally biased toward low complexity.

It belongs to the UreF family. As to quaternary structure, ureD, UreF and UreG form a complex that acts as a GTP-hydrolysis-dependent molecular chaperone, activating the urease apoprotein by helping to assemble the nickel containing metallocenter of UreC. The UreE protein probably delivers the nickel.

It is found in the cytoplasm. Required for maturation of urease via the functional incorporation of the urease nickel metallocenter. This chain is Urease accessory protein UreF, found in Mycolicibacterium vanbaalenii (strain DSM 7251 / JCM 13017 / BCRC 16820 / KCTC 9966 / NRRL B-24157 / PYR-1) (Mycobacterium vanbaalenii).